The chain runs to 160 residues: Protein max (160 aa).

Over residues 1–13 (MSDNDDIEVESDE) the composition is skewed to acidic residues. The segment at 1–40 (MSDNDDIEVESDEEQPRFQSAADKRAHHNALERKRRDHIK) is disordered. Ser-2 bears the N-acetylserine mark. Phosphoserine is present on residues Ser-2 and Ser-11. The bHLH domain maps to 23–74 (DKRAHHNALERKRRDHIKDSFHSLRDSVPSLQGEKASRAQILDKATEYIQYM). The span at 29–40 (NALERKRRDHIK) shows a compositional bias: basic and acidic residues. Lys-66 carries the N6-acetyllysine modification. Residues 81 to 102 (HQQDIDDLKRQNALLEQQVRAL) are leucine-zipper. Residues 103–160 (EKARSSAQLQTNYPSSDNSLYTNAKGSTISAFDGGSDSSSESEPEEPQSRKKLRMEAS) are disordered. Ser-107 carries the phosphoserine modification. Over residues 107–132 (SSAQLQTNYPSSDNSLYTNAKGSTIS) the composition is skewed to polar residues. Positions 152–156 (RKKLR) match the Nuclear localization signal motif. N6-acetyllysine occurs at positions 153 and 154.

This sequence belongs to the MAX family. In terms of assembly, efficient DNA binding requires dimerization with another bHLH protein. Binds DNA as a heterodimer with MYC or MAD. Part of the E2F6.com-1 complex in G0 phase composed of E2F6, MGA, MAX, TFDP1, CBX3, BAT8, EUHMTASE1, RING1, RNF2, MBLR, L3MBTL2 and YAF2. Component of some MLL1/MLL complex, at least composed of the core components KMT2A/MLL1, ASH2L, HCFC1/HCF1, WDR5 and RBBP5, as well as the facultative components BACC1, CHD8, E2F6, HSP70, INO80C, KANSL1, LAS1L, MAX, MCRS1, MGA, MYST1/MOF, PELP1, PHF20, PRP31, RING2, RUVB1/TIP49A, RUVB2/TIP49B, SENP3, TAF1, TAF4, TAF6, TAF7, TAF9 and TEX10. Interacts with SPAG9. The heterodimer MYC:MAX interacts with ABI1; the interaction may enhance MYC:MAX transcriptional activity. In terms of processing, reversible lysine acetylation might regulate the nuclear-cytoplasmic shuttling of specific Max complexes. In terms of tissue distribution, high levels found in the brain, heart and lung while lower levels are seen in the liver, kidney and skeletal muscle.

It is found in the nucleus. It localises to the cell projection. Its subcellular location is the dendrite. Its function is as follows. Transcription regulator. Forms a sequence-specific DNA-binding protein complex with MYC or MAD which recognizes the core sequence 5'-CAC[GA]TG-3'. The MYC:MAX complex is a transcriptional activator, whereas the MAD:MAX complex is a repressor. May repress transcription via the recruitment of a chromatin remodeling complex containing H3 'Lys-9' histone methyltransferase activity. Represses MYC transcriptional activity from E-box elements. This Homo sapiens (Human) protein is Protein max.